We begin with the raw amino-acid sequence, 391 residues long: Phosphoglycerate kinase (391 aa).

Substrate contacts are provided by residues 21-23 (DLN), R36, 59-62 (HLGR), R113, and R146. Residues K197, E319, and 345-348 (GGDT) each bind ATP.

This sequence belongs to the phosphoglycerate kinase family. As to quaternary structure, monomer.

The protein localises to the cytoplasm. It carries out the reaction (2R)-3-phosphoglycerate + ATP = (2R)-3-phospho-glyceroyl phosphate + ADP. It participates in carbohydrate degradation; glycolysis; pyruvate from D-glyceraldehyde 3-phosphate: step 2/5. This is Phosphoglycerate kinase from Shewanella denitrificans (strain OS217 / ATCC BAA-1090 / DSM 15013).